The sequence spans 134 residues: Profilin-5 (134 aa).

Belongs to the profilin family. Occurs in many kinds of cells as a complex with monomeric actin in a 1:1 ratio. Specifically expressed in mature pollen grains. Expressed in germinating pollen grains. Expressed in growing pollen tubes (at protein level).

The protein localises to the cytoplasm. It localises to the cytoskeleton. Functionally, binds to actin monomers and regulates the organization of the actin cytoskeleton. At high concentrations, profilin prevents the polymerization of actin, whereas it enhances it at low concentrations. At low concentrations, associates with the poly-proline motif of formins to enhance actin filament elongation rate. Acts redundantly with PRF4 to regulate apical actin polymerization at the tip of pollen tube and control polarized pollen tube growth. Functions probably by favoring formin-mediated actin polymerization at pollen tube tips. The sequence is that of Profilin-5 from Arabidopsis thaliana (Mouse-ear cress).